The chain runs to 293 residues: Diaminopimelate epimerase (293 aa).

Substrate contacts are provided by Asn-17, Gln-47, and Asn-67. Cys-76 (proton donor) is an active-site residue. Residues 77-78 (GN), Asn-164, Asn-197, and 215-216 (ER) each bind substrate. Residue Cys-224 is the Proton acceptor of the active site. 225–226 (GS) is a substrate binding site.

Belongs to the diaminopimelate epimerase family. As to quaternary structure, homodimer.

Its subcellular location is the cytoplasm. The catalysed reaction is (2S,6S)-2,6-diaminopimelate = meso-2,6-diaminopimelate. The protein operates within amino-acid biosynthesis; L-lysine biosynthesis via DAP pathway; DL-2,6-diaminopimelate from LL-2,6-diaminopimelate: step 1/1. Catalyzes the stereoinversion of LL-2,6-diaminopimelate (L,L-DAP) to meso-diaminopimelate (meso-DAP), a precursor of L-lysine and an essential component of the bacterial peptidoglycan. This Rhodopseudomonas palustris (strain TIE-1) protein is Diaminopimelate epimerase.